Reading from the N-terminus, the 254-residue chain is Nickel import ATP-binding protein NikD (254 aa).

The 240-residue stretch at P2–V241 folds into the ABC transporter domain. G36–S43 is a binding site for ATP.

The protein belongs to the ABC transporter superfamily. Nickel importer (TC 3.A.1.5.3) family. As to quaternary structure, the complex is composed of two ATP-binding proteins (NikD and NikE), two transmembrane proteins (NikB and NikC) and a solute-binding protein (NikA).

It is found in the cell inner membrane. It carries out the reaction Ni(2+)(out) + ATP + H2O = Ni(2+)(in) + ADP + phosphate + H(+). Part of the ABC transporter complex NikABCDE involved in nickel import. Responsible for energy coupling to the transport system. The sequence is that of Nickel import ATP-binding protein NikD from Shigella sonnei (strain Ss046).